The primary structure comprises 837 residues: Striatin-interacting protein 1 (837 aa).

Met-1 is subject to N-acetylmethionine. Disordered stretches follow at residues 1 to 67 (MEPA…ESPD) and 333 to 423 (AASP…KGLP). Residues 18–35 (PQPPPPPPPAAAQPPPGA) show a composition bias toward pro residues. Residues 36–46 (PRAAAGLLPGG) are compositionally biased toward low complexity. The segment covering 47-60 (KAREFNRNQRKDSE) has biased composition (basic and acidic residues). Phosphoserine occurs at positions 59, 335, and 339. The span at 356–377 (KALIKQDNLDAFNERDPYKADD) shows a compositional bias: basic and acidic residues. Acidic residues predominate over residues 378 to 391 (SREEEEENDDDNSL). Ser-788 carries the phosphoserine modification. The interval 796-837 (DNCLQSVLGQRVDLPEDFQMNYDLWLEREVFSKPISWEELLQ) is required for STRIPAK core complex formation.

Belongs to the STRIP family. Part of the core of STRIPAK complexes composed of PP2A catalytic and scaffolding subunits, the striatins (PP2A regulatory subunits), the striatin-associated proteins MOB4, STRIP1 and STRIP2, PDCD10 and members of the STE20 kinases, such as STK24 and STK26. The STRIPAK complex can be extended by adapter proteins such as SLMAP:SIKE1, CTTNBP2 or CTTNBP2NL. Interacts with CDC42BPB. Interacts with CTTNBP2NL.

It localises to the cytoplasm. Its function is as follows. Plays a role in the regulation of cell morphology and cytoskeletal organization. Required in the cortical actin filament dynamics and cell shape. Part of the striatin-interacting phosphatase and kinase (STRIPAK) complexes. STRIPAK complexes have critical roles in protein (de)phosphorylation and are regulators of multiple signaling pathways including Hippo, MAPK, nuclear receptor and cytoskeleton remodeling. Different types of STRIPAK complexes are involved in a variety of biological processes such as cell growth, differentiation, apoptosis, metabolism and immune regulation. In Homo sapiens (Human), this protein is Striatin-interacting protein 1.